The following is a 773-amino-acid chain: MLRARLLVPLVRPALVHRLDRCYSTALGSRFRKSNAVRSELKFDFPDVPVKEELFVQETPDKPLKENKTHVSDEDIDSLFDSLMSDHKAAEATEQHKELPPAEQERPSGANTHTAPIKHDTKSPMEYLAKSKLTPHVSRQVAKAMAGSPTQLLLATPASHHISTPAYQNDLWKHVISTLNTSKFQIPDFNSLMTTIPVDIRAQFLPQIEEWISQRGVKPSAITYGQVMLGYAEDGNVEKVEERFRQMIDNNITPTVHTYAHRLKACDKRGDLKQAMEIFDDLKLAQQLYGIRPNQVIFTTLISTSLRNHKVELASQIFEYMKYASLETQPTAHTYNSLITASAIRSNTERALDLFEEMKQKSVANVRTYQSLILACLRQEKYHLKAWELLLELREQHSESFYSRHTLVVVFQAAAVTGDLVFLRSLYKQLCMSPETYPDAILTQLLMQAYARYDTRTKPVASSALRATWGRLYGGNAQEMMRGFLFPDIEGMVQLNEEHPGMIPPFLPTNTIESLSFDRKKIIAESRAIFQFLKNNKPQLLDNIAATDYLKAGARHRDFPEFLRRYNEVSVGAGEAEGAVISPSEMKTYSARQKKPQRYDLQTQFSPAPRSDAHFFIALNAVQADCIADASERDPNLNHPLRRLTPQEMTDRLEFSQDVWVERGKWRKSDAYKNKYRTEAQQISADYNFALKIINALAALKQLGEAAAILSATPATFNWKKHDLAFFHNVAQAFYHEEAMKQIHKAVSRSKHLDEVIRNPDSEKSAEFDVFSI.

The transit peptide at 1–23 directs the protein to the mitochondrion; the sequence is MLRARLLVPLVRPALVHRLDRCY. Over residues 89-106 the composition is skewed to basic and acidic residues; sequence AAEATEQHKELPPAEQER. A disordered region spans residues 89–122; that stretch reads AAEATEQHKELPPAEQERPSGANTHTAPIKHDTK. PPR repeat units follow at residues 220–254, 255–285, 294–328, 331–365, and 366–400; these read SAITYGQVMLGYAEDGNVEKVEERFRQMIDNNITP, TVHTYAHRLKACDKRGDLKQAMEIFDDLKLA, NQVIFTTLISTSLRNHKVELASQIFEYMKYASLET, TAHTYNSLITASAIRSNTERALDLFEEMKQKSVAN, and VRTYQSLILACLRQEKYHLKAWELLLELREQHSES.

Belongs to the CCM1 family. In terms of assembly, binds to mitochondrial small subunit 15S rRNA.

Its subcellular location is the mitochondrion. In terms of biological role, regulates mitochondrial small subunit maturation by controlling 15S rRNA 5'-end processing. Localizes to the 5' precursor of the 15S rRNA in a position that is subsequently occupied by mS47 in the mature yeast mtSSU. Uses structure and sequence-specific RNA recognition, binding to a single-stranded region of the precursor and specifically recognizing bases -6 to -1. The exchange of Ccm1 for mS47 is coupled to the irreversible removal of precursor rRNA that is accompanied by conformational changes of the mitoribosomal proteins uS5m and mS26. These conformational changes signal completion of 5'-end rRNA processing through protection of the mature 5'-end of the 15S rRNA and stabilization of mS47. The removal of the 5' precursor together with the dissociation of Ccm1 may be catalyzed by the 5'-3' exoribonuclease Pet127. Involved in the specific removal of group I introns in mitochondrial encoded transcripts. In Yarrowia lipolytica (strain CLIB 122 / E 150) (Yeast), this protein is Mitochondrial 15S rRNA processing factor CCM1 (CCM1).